A 249-amino-acid chain; its full sequence is Phosphoribosylaminoimidazole-succinocarboxamide synthase (249 aa).

The protein belongs to the SAICAR synthetase family.

It carries out the reaction 5-amino-1-(5-phospho-D-ribosyl)imidazole-4-carboxylate + L-aspartate + ATP = (2S)-2-[5-amino-1-(5-phospho-beta-D-ribosyl)imidazole-4-carboxamido]succinate + ADP + phosphate + 2 H(+). It functions in the pathway purine metabolism; IMP biosynthesis via de novo pathway; 5-amino-1-(5-phospho-D-ribosyl)imidazole-4-carboxamide from 5-amino-1-(5-phospho-D-ribosyl)imidazole-4-carboxylate: step 1/2. The sequence is that of Phosphoribosylaminoimidazole-succinocarboxamide synthase from Roseiflexus sp. (strain RS-1).